The primary structure comprises 793 residues: Translocase of chloroplast 90, chloroplastic (793 aa).

Positions 22-59 (LGSDPFFRDPHQEQDNHSQAPAAPQPVTLSEPPCSTSS) are disordered. Residues 27–37 (FFRDPHQEQDN) are compositionally biased toward basic and acidic residues. A coiled-coil region spans residues 130 to 157 (LIRAEESELKNVKLRQDRAKALAREQES). The region spanning 164 to 394 (DFSLRILVLG…FRDSIGLGQP (231 aa)) is the AIG1-type G domain. Positions 173–180 (GKTGVGKS) are G1. GTP contacts are provided by residues 176–181 (GVGKSA) and 195–200 (DAFRPG). A Mg(2+)-binding site is contributed by S180. The homodimerization stretch occupies residues 195–198 (DAFR). The G2 stretch occupies residues 199 to 203 (PGTDR). The segment at 220 to 223 (DTPG) is G3. The interval 259–264 (RLDMID) is homodimerization. Residues 279 to 297 (IFGAAIWLNTILVMTHSAA) traverse the membrane as a helical segment. The tract at residues 293 to 296 (THSA) is G4. Residues H294 and 341-342 (EN) contribute to the GTP site. The G5 stretch occupies residues 341-343 (ENH). Coiled-coil stretches lie at residues 410-442 (LRRR…YDQL) and 477-503 (KKQL…DTEQ).

It belongs to the TRAFAC class TrmE-Era-EngA-EngB-Septin-like GTPase superfamily. AIG1/Toc34/Toc159-like paraseptin GTPase family. TOC159 subfamily. As to quaternary structure, homodimer. Part of the TOC core complex that includes 1 protein for the specific recognition of transit peptides surrounded by a ring composed of four proteins forming translocation channels, and four to five GTP-binding proteins providing energy. This core complex can interact with components of the TIC complex to form a larger import complex. Chloroplastic protein precursor such as prSS (precursor of the RuBisCO small subunit) interacts with these complexes. The TOC complex contains a specific subset of polar lipids such as digalactosyldiacylglyceride (DGDG), phosphatidylcholine (PC) and phosphatidylglycerol (PG). Interacts with TOC33 and TOC75. It depends on Mg(2+) as a cofactor. As to expression, expressed in seedlings, leaves, flowers, and roots.

The protein localises to the plastid. It localises to the chloroplast outer membrane. It is found in the cytoplasm. GTPase involved in protein precursor import into chloroplasts. Seems to recognize chloroplast-destined precursor proteins and regulate their presentation to the translocation channel through GTP hydrolysis. Probably specialized in the import of nuclear encoded photosynthetic preproteins from the cytoplasm to the chloroplast. This Arabidopsis thaliana (Mouse-ear cress) protein is Translocase of chloroplast 90, chloroplastic (TOC90).